A 101-amino-acid polypeptide reads, in one-letter code: uncharacterized protein (101 aa).

Positions 1 to 17 are cleaved as a signal peptide; that stretch reads MKKAAVLAVVLSLGLAG. Cysteine 18 is lipidated: N-palmitoyl cysteine. A lipid anchor (S-diacylglycerol cysteine) is attached at cysteine 18.

Its subcellular location is the cell membrane. This is an uncharacterized protein from Pasteurella multocida (strain Pm70).